We begin with the raw amino-acid sequence, 24 residues long: Humanin-like 6 (24 aa).

The protein belongs to the humanin family. As to expression, expressed in skeletal muscle and testis.

The protein localises to the secreted. The protein resides in the cytoplasm. Plays a role as a neuroprotective and antiapoptotic factor. This is Humanin-like 6 from Homo sapiens (Human).